The chain runs to 134 residues: Putative pre-16S rRNA nuclease (134 aa).

It belongs to the YqgF nuclease family.

The protein resides in the cytoplasm. Could be a nuclease involved in processing of the 5'-end of pre-16S rRNA. This Helicobacter pylori (strain Shi470) protein is Putative pre-16S rRNA nuclease.